We begin with the raw amino-acid sequence, 440 residues long: Thymidine phosphorylase (440 aa).

It belongs to the thymidine/pyrimidine-nucleoside phosphorylase family. As to quaternary structure, homodimer.

It carries out the reaction thymidine + phosphate = 2-deoxy-alpha-D-ribose 1-phosphate + thymine. The protein operates within pyrimidine metabolism; dTMP biosynthesis via salvage pathway; dTMP from thymine: step 1/2. In terms of biological role, the enzymes which catalyze the reversible phosphorolysis of pyrimidine nucleosides are involved in the degradation of these compounds and in their utilization as carbon and energy sources, or in the rescue of pyrimidine bases for nucleotide synthesis. The sequence is that of Thymidine phosphorylase from Cronobacter sakazakii (strain ATCC BAA-894) (Enterobacter sakazakii).